A 263-amino-acid chain; its full sequence is 4-hydroxy-tetrahydrodipicolinate reductase (263 aa).

NAD(+)-binding positions include 8-13, Asp34, 99-101, and 125-128; these read GACGRM, GTT, and SPNY. The active-site Proton donor/acceptor is His157. Residue His158 participates in (S)-2,3,4,5-tetrahydrodipicolinate binding. Lys161 (proton donor) is an active-site residue. (S)-2,3,4,5-tetrahydrodipicolinate is bound at residue 167–168; the sequence is GT.

It belongs to the DapB family.

It localises to the cytoplasm. It carries out the reaction (S)-2,3,4,5-tetrahydrodipicolinate + NAD(+) + H2O = (2S,4S)-4-hydroxy-2,3,4,5-tetrahydrodipicolinate + NADH + H(+). The catalysed reaction is (S)-2,3,4,5-tetrahydrodipicolinate + NADP(+) + H2O = (2S,4S)-4-hydroxy-2,3,4,5-tetrahydrodipicolinate + NADPH + H(+). It participates in amino-acid biosynthesis; L-lysine biosynthesis via DAP pathway; (S)-tetrahydrodipicolinate from L-aspartate: step 4/4. In terms of biological role, catalyzes the conversion of 4-hydroxy-tetrahydrodipicolinate (HTPA) to tetrahydrodipicolinate. The sequence is that of 4-hydroxy-tetrahydrodipicolinate reductase from Methanosarcina acetivorans (strain ATCC 35395 / DSM 2834 / JCM 12185 / C2A).